Here is a 44-residue protein sequence, read N- to C-terminus: MESPAFFFTFFLWFLLLSVTGYSVYVSFGPPSKKLRDPFEEHED.

The chain crosses the membrane as a helical span at residues 6 to 26 (FFFTFFLWFLLLSVTGYSVYV).

It belongs to the PsbN family.

It is found in the plastid. The protein resides in the chloroplast thylakoid membrane. Its function is as follows. May play a role in photosystem I and II biogenesis. This is Protein PsbN from Chlamydomonas reinhardtii (Chlamydomonas smithii).